A 433-amino-acid polypeptide reads, in one-letter code: GTPase Obg (433 aa).

Positions methionine 1 to isoleucine 159 constitute an Obg domain. The 168-residue stretch at alanine 160–proline 327 folds into the OBG-type G domain. ATP contacts are provided by residues glycine 166 to serine 173, phenylalanine 191 to serine 195, aspartate 214 to glycine 217, asparagine 280 to glutamate 283, and serine 308 to lysine 310. The Mg(2+) site is built by serine 173 and threonine 193. Residues proline 342 to alanine 430 enclose the OCT domain.

The protein belongs to the TRAFAC class OBG-HflX-like GTPase superfamily. OBG GTPase family. As to quaternary structure, monomer. Mg(2+) is required as a cofactor.

The protein localises to the cytoplasm. In terms of biological role, an essential GTPase which binds GTP, GDP and possibly (p)ppGpp with moderate affinity, with high nucleotide exchange rates and a fairly low GTP hydrolysis rate. Plays a role in control of the cell cycle, stress response, ribosome biogenesis and in those bacteria that undergo differentiation, in morphogenesis control. This chain is GTPase Obg, found in Deinococcus geothermalis (strain DSM 11300 / CIP 105573 / AG-3a).